The chain runs to 412 residues: Alpha-ketoglutarate-dependent sulfonate dioxygenase (412 aa).

Position 52 is a phosphoserine (Ser52). Fe cation contacts are provided by His218 and Asp220. The 2-oxoglutarate site is built by Thr245 and Trp352. Fe cation is bound at residue His367. Residues Arg379 and Arg383 each coordinate 2-oxoglutarate.

It belongs to the TfdA dioxygenase family. The cofactor is Fe(2+).

It participates in organosulfur degradation; alkanesulfonate degradation. Functionally, acts as an alpha-ketoglutarate-dependent dioxygenase active on sulfonates. Although taurine is a poor substrate, a variety of other sulfonates are utilized, with the best natural substrates being isethionate and taurocholate. The protein is Alpha-ketoglutarate-dependent sulfonate dioxygenase (JLP1) of Saccharomyces cerevisiae (strain ATCC 204508 / S288c) (Baker's yeast).